The chain runs to 37 residues: Large ribosomal subunit protein bL36 (37 aa).

This sequence belongs to the bacterial ribosomal protein bL36 family.

This Syntrophomonas wolfei subsp. wolfei (strain DSM 2245B / Goettingen) protein is Large ribosomal subunit protein bL36.